We begin with the raw amino-acid sequence, 132 residues long: Small ribosomal subunit protein uS8 (132 aa).

The protein belongs to the universal ribosomal protein uS8 family. Part of the 30S ribosomal subunit. Contacts proteins S5 and S12.

In terms of biological role, one of the primary rRNA binding proteins, it binds directly to 16S rRNA central domain where it helps coordinate assembly of the platform of the 30S subunit. The protein is Small ribosomal subunit protein uS8 of Bacillus mycoides (strain KBAB4) (Bacillus weihenstephanensis).